The primary structure comprises 205 residues: Octanoyltransferase (205 aa).

The BPL/LPL catalytic domain occupies 30 to 205 (NLSDELVWLL…ILKQEFHKIF (176 aa)). Substrate is bound by residues 68–75 (RGGKYTYH), 140–142 (AFG), and 153–155 (GIA). Residue cysteine 171 is the Acyl-thioester intermediate of the active site.

The protein belongs to the LipB family.

It is found in the cytoplasm. It carries out the reaction octanoyl-[ACP] + L-lysyl-[protein] = N(6)-octanoyl-L-lysyl-[protein] + holo-[ACP] + H(+). It functions in the pathway protein modification; protein lipoylation via endogenous pathway; protein N(6)-(lipoyl)lysine from octanoyl-[acyl-carrier-protein]: step 1/2. In terms of biological role, catalyzes the transfer of endogenously produced octanoic acid from octanoyl-acyl-carrier-protein onto the lipoyl domains of lipoate-dependent enzymes. Lipoyl-ACP can also act as a substrate although octanoyl-ACP is likely to be the physiological substrate. This is Octanoyltransferase from Wolbachia pipientis subsp. Culex pipiens (strain wPip).